Reading from the N-terminus, the 932-residue chain is Eukaryotic translation initiation factor 3 subunit A (932 aa).

Positions 309–492 (KPATANFVIL…NSISFSSDLF (184 aa)) constitute a PCI domain. Serine 374 and serine 501 each carry phosphoserine. Residues 537–862 (LRKQQAEAAY…DEEISRKLAE (326 aa)) are a coiled coil. Positions 793–865 (AEEEAARAAE…ISRKLAEKAA (73 aa)) are enriched in basic and acidic residues. The interval 793 to 932 (AEEEAARAAE…PPSRRNQQQQ (140 aa)) is disordered. A phosphoserine mark is found at serine 874, serine 875, and serine 877. Positions 877–893 (SPGAWRRGGASAGGVSR) are enriched in low complexity.

The protein belongs to the eIF-3 subunit A family. Component of the eukaryotic translation initiation factor 3 (eIF-3) complex. The eIF-3 complex appears to include tif32/eif3a, SPAC25G10.08/eif3b, tif33/eif3c, SPBC4C3.07/eif3f, tif35/eif3g and sum1/eif3i. This set of common subunits may also associate exclusively with either moe1/eif3d and int6/eif3e, or with SPAC821.05/eif3h and SPAC1751.03/eif3m. The eIF-3 complex may also include SPAC3A12.13c/eif3j.

The protein localises to the cytoplasm. In terms of biological role, RNA-binding component of the eukaryotic translation initiation factor 3 (eIF-3) complex, which is involved in protein synthesis of a specialized repertoire of mRNAs and, together with other initiation factors, stimulates binding of mRNA and methionyl-tRNAi to the 40S ribosome. The eIF-3 complex specifically targets and initiates translation of a subset of mRNAs involved in cell proliferation. This chain is Eukaryotic translation initiation factor 3 subunit A (tif32), found in Schizosaccharomyces pombe (strain 972 / ATCC 24843) (Fission yeast).